The sequence spans 275 residues: Elongation factor Ts (275 aa).

The interval Thr-76 to Val-79 is involved in Mg(2+) ion dislocation from EF-Tu.

It belongs to the EF-Ts family.

It is found in the cytoplasm. Functionally, associates with the EF-Tu.GDP complex and induces the exchange of GDP to GTP. It remains bound to the aminoacyl-tRNA.EF-Tu.GTP complex up to the GTP hydrolysis stage on the ribosome. The sequence is that of Elongation factor Ts from Corynebacterium glutamicum (strain ATCC 13032 / DSM 20300 / JCM 1318 / BCRC 11384 / CCUG 27702 / LMG 3730 / NBRC 12168 / NCIMB 10025 / NRRL B-2784 / 534).